Consider the following 826-residue polypeptide: DNA mismatch repair protein MutS (826 aa).

An ATP-binding site is contributed by 622–629 (GPNMAGKS).

Belongs to the DNA mismatch repair MutS family.

Its function is as follows. This protein is involved in the repair of mismatches in DNA. It is possible that it carries out the mismatch recognition step. This protein has a weak ATPase activity. In Chlamydia abortus (strain DSM 27085 / S26/3) (Chlamydophila abortus), this protein is DNA mismatch repair protein MutS.